The sequence spans 729 residues: Transcriptional activator ptaB (729 aa).

A compositionally biased stretch (pro residues) spans 1-12; it reads MPQHPGLPPGHP. 4 disordered regions span residues 1–69, 207–341, 505–538, and 614–729; these read MPQH…QAHA, AAAA…QNQA, LELS…SLPE, and RGPQ…KGTA. Low complexity predominate over residues 38-56; it reads PGGPQVTQGGPMMGMPPGA. Positions 272-285 are enriched in pro residues; it reads APQPHPTPNPPPQQ. Low complexity-rich tracts occupy residues 286-300 and 307-341; these read LPQA…HQQP and QPQQ…QNQA. Polar residues predominate over residues 614–625; the sequence is RGPQMNGPNQFA. Residues 655–671 show a composition bias toward low complexity; sequence GPPGMVQQGQMQPNVGQ. Positions 672–682 are enriched in polar residues; the sequence is ATSASASPQVT.

It belongs to the MFG1 family. Interacts with somA.

Its subcellular location is the nucleus. Its function is as follows. Transcriptional regulator that forms a complex with somA to control biofilm formation. This Aspergillus fumigatus (strain ATCC MYA-4609 / CBS 101355 / FGSC A1100 / Af293) (Neosartorya fumigata) protein is Transcriptional activator ptaB.